The sequence spans 595 residues: Phytoene desaturase (595 aa).

An N-terminal signal peptide occupies residues 1 to 23 (MAETQRPRSAIIVGAGAGGIAVA). A helical transmembrane segment spans residues 574–594 (SQRAFPLLVALMGVLYFLLFV).

The protein belongs to the carotenoid/retinoid oxidoreductase family. The cofactor is NAD(+).

It is found in the membrane. It carries out the reaction 15-cis-phytoene + A = all-trans-phytofluene + AH2. The catalysed reaction is all-trans-phytofluene + A = all-trans-zeta-carotene + AH2. The enzyme catalyses all-trans-zeta-carotene + A = all-trans-neurosporene + AH2. It catalyses the reaction all-trans-neurosporene + A = all-trans-lycopene + AH2. It carries out the reaction all-trans-lycopene + A = all-trans-3,4-didehydrolycopene + AH2. It participates in carotenoid biosynthesis; lycopene biosynthesis. Functionally, phytoene desaturase involved in the carotenoid biosynthesis pathway. Converts phytoene into 3,4-didehydrolycopene via the intermediates phytofluene, zeta-carotene, neurosporene and lycopene, by introducing up to five double bonds into phytoene. Is also able to desaturate 1-hydroxyneurosporene into 1-hydroxylycopene and 1-hydroxylycopene into 1-hydroxy-3,4-didehydrolycopene. Gamma-carotene and 1,19-dihydroxylycopene are not accepted as substrates. Neurosporaxanthin is synthesized from geranyl-geranyl pyrophosphate (GGPP) through several enzymatic activities. Phytoene synthase activity performed by the bifunctional enzyme al-2 first produces phytoene from geranyl-geranyl pyrophosphate (GGPP). The phytoene dehydrogenase al-1 then introduces 5 desaturations to lead to 3,4-didehydrolycopene via the intermediates phytofluene, zeta-carotene, neurosporene and lycopene. Al-2 cyclase activity then converts 3,4-didehydrolycopene into torulene. Al-2 can also convet lycopene into gamma-carotene which in turn is converted to beta-carotene by an additional al-2 cyclization reaction. Torulene is the substrate of the dioxidase cao-2 that breaks the molecule, removing five carbon atoms to yield beta-apo-4'-carotenal, whereas the aldehyde dehydrogenase ylo-1 mediates the last step by converting beta-apo-4'-carotenal into neurosporaxanthin. This is Phytoene desaturase from Neurospora crassa (strain ATCC 24698 / 74-OR23-1A / CBS 708.71 / DSM 1257 / FGSC 987).